Here is a 207-residue protein sequence, read N- to C-terminus: Large ribosomal subunit protein uL4 (207 aa).

The segment at 49 to 78 is disordered; the sequence is HAVKNRSAVRGGGRKPWRQKGTGRARQGSI. The segment covering 60–71 has biased composition (basic residues); it reads GGRKPWRQKGTG.

The protein belongs to the universal ribosomal protein uL4 family. In terms of assembly, part of the 50S ribosomal subunit.

Functionally, one of the primary rRNA binding proteins, this protein initially binds near the 5'-end of the 23S rRNA. It is important during the early stages of 50S assembly. It makes multiple contacts with different domains of the 23S rRNA in the assembled 50S subunit and ribosome. In terms of biological role, forms part of the polypeptide exit tunnel. The chain is Large ribosomal subunit protein uL4 from Enterococcus faecalis (strain ATCC 700802 / V583).